The chain runs to 239 residues: THAP domain-containing protein 3 (239 aa).

The segment at 1 to 82 adopts a THAP-type zinc-finger fold; it reads MPKSCAARQC…LKHNAVPTVF (82 aa). Residues 84–177 form a disordered region; that stretch reads FQDPTQQVRE…RRTPNKQPSD (94 aa). Ser122 carries the phosphoserine modification. The HCFC1-binding motif (HBM) motif lies at 177–180; that stretch reads DHSY.

Component of a THAP1/THAP3-HCFC1-OGT complex that contains at least, either THAP1 or THAP3, HCFC1 and OGT. Interacts directly with OGT and HCFC1 (via its HBM). As to expression, highly expressed in heart, skeletal muscle and placenta. Weaker expression in brain, kidney and liver.

Its function is as follows. Component of a THAP1/THAP3-HCFC1-OGT complex that is required for the regulation of the transcriptional activity of RRM1. In Homo sapiens (Human), this protein is THAP domain-containing protein 3 (THAP3).